The sequence spans 337 residues: Diacylglycerol O-acyltransferase 2-like protein 6 (337 aa).

2 consecutive transmembrane segments (helical) span residues I22–F42 and Y102–T122.

Belongs to the diacylglycerol acyltransferase family.

Its subcellular location is the endoplasmic reticulum membrane. It catalyses the reaction 1,2-di-(9Z-octadecenoyl)-sn-glycerol + (9Z)-octadecenoyl-CoA = 1,2,3-tri-(9Z-octadecenoyl)-glycerol + CoA. Its function is as follows. Diglyceride acyltransferase that uses fatty acyl-CoA as substrate. Particularly active with oleate as a substrate. Has no wax synthase activity to produce wax esters. The protein is Diacylglycerol O-acyltransferase 2-like protein 6 (Dgat2l6) of Mus musculus (Mouse).